Here is a 581-residue protein sequence, read N- to C-terminus: MAMIGMNIIGLFMVLMLLLISLIILFACKPWRYFSRFRSSSRFSSTFKVGDLQRPLISDDGNLIQGQTSEVTREYDLEGACYQNDGLLHSSLTEGRFYKQRLPSSSPHFSQGESFVLEVISEPSDNALVGQTLKLPAEKGSLAEVQTYDWQNNRNENLQYNLEKDRLINLSPRLVEDQRSWLFLEVIAGPAIGLQHAVNSTSSSKLPVKLGRVSPSDLALKDSEVSGKHAQITWNSTKFKWELVDMGSLNGTLVNSHSISHPDLGSRKWGNPVELASDDIITLGTTTKVYVRISSQNEFQIPFKIGVASDPMAMRRGGRKLPMEDVCHYKWPLPGANKFGLFCVCDGHGGSGAAQSAIKIIPEVLANILSDSLRKEKVLSKRDASDVLRDMFAKTEARLEEHQYEGCTATVLLVWKDNEENFFAQCANLGDSACVIHLGGRYIQMTEDHRVVSLSERKRFQEAGLALRDGETRLFGINLARMLGDKFPKQQDSRFSAEPYISEPLRIDQSSKDVFAVLASDGLWDVVSPKKAVQLVLQMRDKERGRESSAEKIANGLLNEARAMRTKDNTSIIYLDFDTSL.

The Extracellular segment spans residues 1-7; sequence MAMIGMN. Residues 8–28 traverse the membrane as a helical segment; the sequence is IIGLFMVLMLLLISLIILFAC. The Cytoplasmic segment spans residues 29–581; that stretch reads KPWRYFSRFR…IIYLDFDTSL (553 aa). An FHA domain is found at 208–259; it reads VKLGRVSPSDLALKDSEVSGKHAQITWNSTKFKWELVDMGSLNGTLVNSHSI. One can recognise a PPM-type phosphatase domain in the interval 304–577; that stretch reads KIGVASDPMA…DNTSIIYLDF (274 aa). Residues Asp-346, Gly-347, Asp-521, and Asp-568 each contribute to the Mn(2+) site.

In terms of assembly, association of RLK5 with kapp domain is dependent on phosphorylation of RLK5 and can be abolished by dephosphorylation. Interacts with SERK1 and CDC48A. Component of the SERK1 signaling complex, composed of KAPP, CDC48A, GRF6 or GRF7, SERK1, SERK2, SERK3/BAK1 and BRI1. Interacts with CLV1. Mg(2+) serves as cofactor. It depends on Mn(2+) as a cofactor. As to expression, expressed in all tissues examined.

It is found in the cell membrane. The enzyme catalyses O-phospho-L-seryl-[protein] + H2O = L-seryl-[protein] + phosphate. It catalyses the reaction O-phospho-L-threonyl-[protein] + H2O = L-threonyl-[protein] + phosphate. Its function is as follows. Dephosphorylates the Ser/Thr receptor-like kinase RLK5. May function as a signaling component in a pathway involving RLK5. Binds and dephosphorylates CLAVATA1 (CLV1). Functions as a negative regulator of the CLV1 signaling in plant development. Dephosphorylates SERK1 receptor kinase on threonine residues in the A-loop. Dephosphorylation of SERK1 controls SERK1 internalization. Component of a signaling pathway which mediates adaptation to NaCl stress. Is not a component of the SALT OVERLY SENSITIVE (SOS) pathway. This Arabidopsis thaliana (Mouse-ear cress) protein is Protein phosphatase 2C 70.